We begin with the raw amino-acid sequence, 202 residues long: uncharacterized protein (202 aa).

This is an uncharacterized protein from Bacillus anthracis.